The following is a 522-amino-acid chain: Cytochrome P450 1A3 (522 aa).

Phe229 serves as a coordination point for substrate. Residue Cys463 coordinates heme.

It belongs to the cytochrome P450 family. Heme is required as a cofactor. Liver.

The protein localises to the endoplasmic reticulum membrane. The protein resides in the microsome membrane. The enzyme catalyses an organic molecule + reduced [NADPH--hemoprotein reductase] + O2 = an alcohol + oxidized [NADPH--hemoprotein reductase] + H2O + H(+). Cytochromes P450 are a group of heme-thiolate monooxygenases. They oxidize a variety of structurally unrelated compounds, including steroids, fatty acids, and xenobiotics. The chain is Cytochrome P450 1A3 (cyp1a3) from Oncorhynchus mykiss (Rainbow trout).